A 130-amino-acid polypeptide reads, in one-letter code: Small ribosomal subunit protein uS11 (130 aa).

This sequence belongs to the universal ribosomal protein uS11 family. In terms of assembly, part of the 30S ribosomal subunit. Interacts with proteins S7 and S18. Binds to IF-3.

In terms of biological role, located on the platform of the 30S subunit, it bridges several disparate RNA helices of the 16S rRNA. Forms part of the Shine-Dalgarno cleft in the 70S ribosome. This Shewanella amazonensis (strain ATCC BAA-1098 / SB2B) protein is Small ribosomal subunit protein uS11.